The sequence spans 90 residues: Long neurotoxin 1 (90 aa).

Positions 1-21 (MKTLLLTLVVVTIVCLDVGNS) are cleaved as a signal peptide. Disulfide bonds link C24–C42, C35–C63, C48–C52, C67–C78, and C79–C84.

Belongs to the three-finger toxin family. Long-chain subfamily. Type II alpha-neurotoxin sub-subfamily. Expressed by the venom gland.

Its subcellular location is the secreted. Its function is as follows. Binds with high affinity to muscular (alpha-1/CHRNA1) and neuronal (alpha-7/CHRNA7) nicotinic acetylcholine receptor (nAChR) and inhibits acetylcholine from binding to the receptor, thereby impairing neuromuscular and neuronal transmission. The sequence is that of Long neurotoxin 1 from Austrelaps superbus (Lowland copperhead snake).